The following is a 386-amino-acid chain: Succinate--CoA ligase [ADP-forming] subunit beta (386 aa).

One can recognise an ATP-grasp domain in the interval 9–244 (KEILRKYGVP…HDEEDPLETR (236 aa)). Residues Lys46, 53–55 (GRG), Glu99, Cys102, and Glu107 each bind ATP. Positions 199 and 213 each coordinate Mg(2+). Residues Asn264 and 321–323 (GIM) contribute to the substrate site.

It belongs to the succinate/malate CoA ligase beta subunit family. In terms of assembly, heterotetramer of two alpha and two beta subunits. It depends on Mg(2+) as a cofactor.

It carries out the reaction succinate + ATP + CoA = succinyl-CoA + ADP + phosphate. The enzyme catalyses GTP + succinate + CoA = succinyl-CoA + GDP + phosphate. It functions in the pathway carbohydrate metabolism; tricarboxylic acid cycle; succinate from succinyl-CoA (ligase route): step 1/1. In terms of biological role, succinyl-CoA synthetase functions in the citric acid cycle (TCA), coupling the hydrolysis of succinyl-CoA to the synthesis of either ATP or GTP and thus represents the only step of substrate-level phosphorylation in the TCA. The beta subunit provides nucleotide specificity of the enzyme and binds the substrate succinate, while the binding sites for coenzyme A and phosphate are found in the alpha subunit. The chain is Succinate--CoA ligase [ADP-forming] subunit beta from Rickettsia akari (strain Hartford).